A 188-amino-acid chain; its full sequence is Molybdopterin synthase catalytic subunit (188 aa).

S20 bears the Phosphoserine mark. Residues 143-144 (HR), K159, and 166-168 (KKE) contribute to the substrate site.

It belongs to the MoaE family. MOCS2B subfamily. In terms of assembly, heterotetramer; composed of 2 small (MOCS2A) and 2 large (MOCS2B) subunits. Highest levels are found in heart and skeletal muscle. Lower levels are present in brain, kidney and pancreas. Very low levels are found in lung and peripheral blood leukocytes.

It localises to the cytoplasm. It is found in the cytosol. The enzyme catalyses 2 [molybdopterin-synthase sulfur-carrier protein]-C-terminal-Gly-aminoethanethioate + cyclic pyranopterin phosphate + H2O = molybdopterin + 2 [molybdopterin-synthase sulfur-carrier protein]-C-terminal Gly-Gly + 2 H(+). It functions in the pathway cofactor biosynthesis; molybdopterin biosynthesis. In terms of biological role, catalytic subunit of the molybdopterin synthase complex, a complex that catalyzes the conversion of precursor Z into molybdopterin. Acts by mediating the incorporation of 2 sulfur atoms from thiocarboxylated MOCS2A into precursor Z to generate a dithiolene group. The polypeptide is Molybdopterin synthase catalytic subunit (Homo sapiens (Human)).